The chain runs to 441 residues: Eukaryotic translation initiation factor 3 subunit M (441 aa).

Positions 196 to 365 constitute a PCI domain; sequence ESEQAYTYLL…QTFLIHRSTY (170 aa). Residues 405–418 are compositionally biased toward basic and acidic residues; it reads KEEEANKADNKYDS. A disordered region spans residues 405–441; sequence KEEEANKADNKYDSARGFQRGGQRKQPRALDDDMGLE.

Belongs to the eIF-3 subunit M family. In terms of assembly, component of the eukaryotic translation initiation factor 3 (eIF-3) complex.

The protein resides in the cytoplasm. Component of the eukaryotic translation initiation factor 3 (eIF-3) complex, which is involved in protein synthesis of a specialized repertoire of mRNAs and, together with other initiation factors, stimulates binding of mRNA and methionyl-tRNAi to the 40S ribosome. The eIF-3 complex specifically targets and initiates translation of a subset of mRNAs involved in cell proliferation. This is Eukaryotic translation initiation factor 3 subunit M from Phaeosphaeria nodorum (strain SN15 / ATCC MYA-4574 / FGSC 10173) (Glume blotch fungus).